The chain runs to 139 residues: Large ribosomal subunit protein bL17 (139 aa).

This sequence belongs to the bacterial ribosomal protein bL17 family. Part of the 50S ribosomal subunit. Contacts protein L32.

The polypeptide is Large ribosomal subunit protein bL17 (Cereibacter sphaeroides (strain ATCC 17029 / ATH 2.4.9) (Rhodobacter sphaeroides)).